Reading from the N-terminus, the 940-residue chain is Isoleucine--tRNA ligase (940 aa).

Positions 58-68 (PYANGSIHIGH) match the 'HIGH' region motif. Glu564 is an L-isoleucyl-5'-AMP binding site. The 'KMSKS' region signature appears at 605–609 (KMSKS). Position 608 (Lys608) interacts with ATP. Positions 903, 906, 923, and 926 each coordinate Zn(2+).

Belongs to the class-I aminoacyl-tRNA synthetase family. IleS type 1 subfamily. As to quaternary structure, monomer. Zn(2+) serves as cofactor.

It localises to the cytoplasm. It carries out the reaction tRNA(Ile) + L-isoleucine + ATP = L-isoleucyl-tRNA(Ile) + AMP + diphosphate. Its function is as follows. Catalyzes the attachment of isoleucine to tRNA(Ile). As IleRS can inadvertently accommodate and process structurally similar amino acids such as valine, to avoid such errors it has two additional distinct tRNA(Ile)-dependent editing activities. One activity is designated as 'pretransfer' editing and involves the hydrolysis of activated Val-AMP. The other activity is designated 'posttransfer' editing and involves deacylation of mischarged Val-tRNA(Ile). This is Isoleucine--tRNA ligase from Shewanella woodyi (strain ATCC 51908 / MS32).